A 181-amino-acid polypeptide reads, in one-letter code: Large ribosomal subunit protein uL6 (181 aa).

This sequence belongs to the universal ribosomal protein uL6 family. In terms of assembly, part of the 50S ribosomal subunit.

This protein binds to the 23S rRNA, and is important in its secondary structure. It is located near the subunit interface in the base of the L7/L12 stalk, and near the tRNA binding site of the peptidyltransferase center. The sequence is that of Large ribosomal subunit protein uL6 from Rhodopirellula baltica (strain DSM 10527 / NCIMB 13988 / SH1).